The chain runs to 224 residues: Stage II sporulation protein R (224 aa).

This chain is Stage II sporulation protein R (spoIIR), found in Bacillus subtilis (strain 168).